Here is a 57-residue protein sequence, read N- to C-terminus: Ribosome modulation factor 2 (57 aa).

The tract at residues 1-24 is disordered; that stretch reads MKRQKRDKLGRAHSNGYQAGLGGK.

This sequence belongs to the ribosome modulation factor family.

It is found in the cytoplasm. In terms of biological role, during stationary phase, converts 70S ribosomes to an inactive dimeric form (100S ribosomes). This chain is Ribosome modulation factor 2, found in Colwellia psychrerythraea (strain 34H / ATCC BAA-681) (Vibrio psychroerythus).